The following is an 88-amino-acid chain: Small ribosomal subunit protein uS15 (88 aa).

It belongs to the universal ribosomal protein uS15 family. Part of the 30S ribosomal subunit. Forms a bridge to the 50S subunit in the 70S ribosome, contacting the 23S rRNA.

One of the primary rRNA binding proteins, it binds directly to 16S rRNA where it helps nucleate assembly of the platform of the 30S subunit by binding and bridging several RNA helices of the 16S rRNA. Functionally, forms an intersubunit bridge (bridge B4) with the 23S rRNA of the 50S subunit in the ribosome. This Variovorax paradoxus (strain S110) protein is Small ribosomal subunit protein uS15.